We begin with the raw amino-acid sequence, 144 residues long: Large ribosomal subunit protein uL16 (144 aa).

Residues 1-17 are compositionally biased toward basic residues; it reads MLQPKKTKFRRQQKGRA. Residues 1–22 form a disordered region; the sequence is MLQPKKTKFRRQQKGRAKGNAQ.

Belongs to the universal ribosomal protein uL16 family. Part of the 50S ribosomal subunit.

Binds 23S rRNA and is also seen to make contacts with the A and possibly P site tRNAs. The protein is Large ribosomal subunit protein uL16 of Bacteroides thetaiotaomicron (strain ATCC 29148 / DSM 2079 / JCM 5827 / CCUG 10774 / NCTC 10582 / VPI-5482 / E50).